Here is a 973-residue protein sequence, read N- to C-terminus: Sensor histidine kinase TmoS (973 aa).

In terms of domain architecture, PAS 1 spans 32–103; sequence REELARIIFD…NQKRLVEAAS (72 aa). The region spanning 108–162 is the PAC 1 domain; it reads VRCDIEILGKSGGREVIAVDFSLLPIRDEQENIVFLLAEGRNITDKKKAEAMLAL. The Histidine kinase 1 domain maps to 187–405; that stretch reads KVSHELRTPL…LFQVKLPLNA (219 aa). At histidine 190 the chain carries Phosphohistidine; by autocatalysis. The Response regulatory domain occupies 452-567; that stretch reads RVLIVEDNPD…ELRARVSNLI (116 aa). 4-aspartylphosphate is present on aspartate 500. One can recognise a PAS 2 domain in the interval 611-681; sequence SEARWKAVYE…QRLARLLQSG (71 aa). A PAC 2 domain is found at 685–737; that stretch reads YSVECSYLCKNGSTIWANASVSLMSPRVDEPQVILQIIDDITEKKQAQETLNQ. In terms of domain architecture, Histidine kinase 2 spans 757 to 973; it reads YIAHEINQPL…ACFFVSIPVS (217 aa). A Phosphohistidine modification is found at histidine 760.

Post-translationally, autophosphorylated. Activation requires a sequential transfer of a phosphate group from a His in the primary transmitter domain, to an Asp in the receiver domain and to a His in the secondary transmitter domain.

The protein localises to the cytoplasm. It carries out the reaction ATP + protein L-histidine = ADP + protein N-phospho-L-histidine.. With respect to regulation, activity is regulated by agonists and antagonists. Binding of agonists such as toluene or benzene to TmoS stimulates autophosphorylation. Toluene causes the most pronounced increase, followed by benzene, chlorobenzene and ethylbenzene. Activity is inhibited by antagonists such as o-xylene, o-chlorotoluene and trimethylbenzene isomers, which bind to TmoS but do not stimulate autophosphorylation. Functionally, member of the two-component regulatory system TmoS/TmoT involved in the regulation of toluene degradation. Probably phosphorylates TmoT via a four-step phosphorelay in response to toluene. Can also be induced by benzene and ethylbenzene. This is Sensor histidine kinase TmoS (tmoS) from Ectopseudomonas mendocina (Pseudomonas mendocina).